The sequence spans 199 residues: ATP-dependent Clp protease proteolytic subunit (199 aa).

Catalysis depends on Ser-103, which acts as the Nucleophile. His-128 is an active-site residue.

Belongs to the peptidase S14 family. Fourteen ClpP subunits assemble into 2 heptameric rings which stack back to back to give a disk-like structure with a central cavity, resembling the structure of eukaryotic proteasomes.

It localises to the cytoplasm. It catalyses the reaction Hydrolysis of proteins to small peptides in the presence of ATP and magnesium. alpha-casein is the usual test substrate. In the absence of ATP, only oligopeptides shorter than five residues are hydrolyzed (such as succinyl-Leu-Tyr-|-NHMec, and Leu-Tyr-Leu-|-Tyr-Trp, in which cleavage of the -Tyr-|-Leu- and -Tyr-|-Trp bonds also occurs).. Its function is as follows. Cleaves peptides in various proteins in a process that requires ATP hydrolysis. Has a chymotrypsin-like activity. Plays a major role in the degradation of misfolded proteins. This Photobacterium profundum (strain SS9) protein is ATP-dependent Clp protease proteolytic subunit.